We begin with the raw amino-acid sequence, 262 residues long: Protein FLOURY 2 (262 aa).

A signal peptide spans 1–21 (MATKILALLALLALLVSATNA).

This sequence belongs to the zein family.

It is found in the endoplasmic reticulum membrane. In terms of biological role, zeins are major seed storage proteins. This chain is Protein FLOURY 2, found in Zea mays (Maize).